Reading from the N-terminus, the 145-residue chain is D-aminoacyl-tRNA deacylase (145 aa).

The short motif at Gly-137–Pro-138 is the Gly-cisPro motif, important for rejection of L-amino acids element.

It belongs to the DTD family. In terms of assembly, homodimer.

The protein localises to the cytoplasm. The enzyme catalyses glycyl-tRNA(Ala) + H2O = tRNA(Ala) + glycine + H(+). The catalysed reaction is a D-aminoacyl-tRNA + H2O = a tRNA + a D-alpha-amino acid + H(+). In terms of biological role, an aminoacyl-tRNA editing enzyme that deacylates mischarged D-aminoacyl-tRNAs. Also deacylates mischarged glycyl-tRNA(Ala), protecting cells against glycine mischarging by AlaRS. Acts via tRNA-based rather than protein-based catalysis; rejects L-amino acids rather than detecting D-amino acids in the active site. By recycling D-aminoacyl-tRNA to D-amino acids and free tRNA molecules, this enzyme counteracts the toxicity associated with the formation of D-aminoacyl-tRNA entities in vivo and helps enforce protein L-homochirality. In Salmonella choleraesuis (strain SC-B67), this protein is D-aminoacyl-tRNA deacylase.